We begin with the raw amino-acid sequence, 700 residues long: Methionine--tRNA ligase (700 aa).

Residues 16 to 26 carry the 'HIGH' region motif; the sequence is PYANGAFHVGH. Cysteine 148, cysteine 151, cysteine 161, and cysteine 164 together coordinate Zn(2+). The short motif at 337-341 is the 'KMSKS' region element; that stretch reads KMSKS. Lysine 340 contributes to the ATP binding site. Residues 594–700 form the tRNA-binding domain; the sequence is DFAKIDLRIA…PGAEPGMRVG (107 aa).

Belongs to the class-I aminoacyl-tRNA synthetase family. MetG type 1 subfamily. Homodimer. It depends on Zn(2+) as a cofactor.

It is found in the cytoplasm. It carries out the reaction tRNA(Met) + L-methionine + ATP = L-methionyl-tRNA(Met) + AMP + diphosphate. In terms of biological role, is required not only for elongation of protein synthesis but also for the initiation of all mRNA translation through initiator tRNA(fMet) aminoacylation. In Janthinobacterium sp. (strain Marseille) (Minibacterium massiliensis), this protein is Methionine--tRNA ligase.